The sequence spans 179 residues: Lebocin-4 (179 aa).

A signal peptide spans 1 to 16 (MYKFLVFSSVLVLFFA). Positions 17 to 120 (QASCQRFIQP…RPIESHRNTR (104 aa)) are excised as a propeptide. The O-linked (GalNAc...) threonine glycan is linked to Thr-135. Residues 153-179 (RRHASDDQEELRHHNEHFLIPRDILQD) constitute a propeptide that is removed on maturation.

It belongs to the lebocin family. O-glycosylation is important for the antibacterial activity of lebocin. In terms of tissue distribution, hemolymph. Produced in fat body.

It localises to the secreted. Antibacterial peptide. The polypeptide is Lebocin-4 (LEB4) (Bombyx mori (Silk moth)).